The primary structure comprises 262 residues: Phosphonates import ATP-binding protein PhnC (262 aa).

The ABC transporter domain maps to 5–253 (IRVEKLAKTF…RFDHLYRSIN (249 aa)). ATP is bound at residue 37–44 (GPSGSGKS).

This sequence belongs to the ABC transporter superfamily. Phosphonates importer (TC 3.A.1.9.1) family. As to quaternary structure, the complex is composed of two ATP-binding proteins (PhnC), two transmembrane proteins (PhnE) and a solute-binding protein (PhnD).

The protein resides in the cell inner membrane. It carries out the reaction phosphonate(out) + ATP + H2O = phosphonate(in) + ADP + phosphate + H(+). Its function is as follows. Part of the ABC transporter complex PhnCDE involved in phosphonates import. Responsible for energy coupling to the transport system. This chain is Phosphonates import ATP-binding protein PhnC, found in Shigella sonnei (strain Ss046).